Reading from the N-terminus, the 1007-residue chain is MELGRKLYIRSLVNVAGEPLSYFWPMRNFVYHNPLHELEGEHFSKAIKEGEEIFKGRAFLRRKDYIDFLNKGLIKEEKLLNSLKENVNLEGAPLTYEDLLRLIKDEKLKVYENTYLIREADTDLVEKLKGFFSENPKEVMENLFSEFGKKYTIADFVDLFFGESVNRTVNELLIKLSLDFLDEGQSVVEMPRRKEGFFRAFRELAKYNLRFIIRGGRELGELMESFEEPEEAIDNILKSYGIPEELWERYITLELAKLKGIAGYIKWRSHNKHYYFQRVYPSDLVEFLAVRLILEKGILEHRKKVYPFEPTYENFKRFFEEKIEEAFLTYEYATKRVPAELSSQVRENLKNAESFINTYLSRKAHINASNFALFLKDWLGERVKELSKEELKKVLEIYGEFQEKEGFIWLEALEDSLIERLTEGVLRANQEKEKPKAQALFCIDVRSERYRRNLEKIGNYETYGIAGFFGVPMAFVEIHKGHEEFLCPVLIKPRNVVLEIPKEMKEEYEVTHLLEHILHDLKQNVLTPYVTVEAIGFLFGFDFIGKTFMPYSYSKLKEKLLESKENVDYIINKPSREEVKELVNRVYETILKRVFEHEYGIKNPEKPLLEETLKVCLGETDYSERLELYGFKGEKQREFIERLRKVYKVDRGYWNILFERLSKLGFTLDEQASLIGRALKMVGLTEFAPFVFIIGHGSKSDNNPYESALDCGACGGASGLYNAIVFCRMANNPEVRKRIKEKFGINIPENTYFVPGLHNTTTDEVHFYDLEQFPQEVKEKLKEIKEDFDKASMLTASERYKELFDEEAEDELRKIYKVVENAYDWSQVRPEWGLSGNYAFVIGRRELTKHLNLEGKVFLHSYDYRVDRRGFLLEVILSGPAIVGQWINMEYYFSTTDNEVYGSGSKVYHNVVGRFGVISGNFSDLRTGLPTQTVYKEGKPLHIPARLIILLEAPYEFALSVINRVYAIRNLIQNEWVNFVIFDPESKKFYRYKKGSWNELKTEVKDG.

Residues Cys442, Asp444, His696, and Cys711 each contribute to the Zn(2+) site.

This sequence belongs to the inorganic carbon transporter (TC 9.A.2) DabA family. Forms a complex with DabB. Zn(2+) is required as a cofactor.

The protein localises to the cell inner membrane. Its function is as follows. Part of an energy-coupled inorganic carbon pump. This chain is Probable inorganic carbon transporter subunit DabA, found in Aquifex aeolicus (strain VF5).